Reading from the N-terminus, the 772-residue chain is MTDTTAQHVVDTVANAAATPEREQPFAALGLKPDEYASIREILGRRPTNGELAMYSVMWSEHCSYKSSKIYLRQFGQKVTPAMKKNLMVGMGENAGVVDIGEGWAVTFKVESHNHPSYIEPFQGAATGVGGIVRDIISMGARPVAVMDQLRFGAIDEPDTAHVVHGVVSGISFYGNCLGLPNIGGETYFDPVYQGNPLVNALSVGVLRHEDLHLANASGVGNKVVLFGARTGGDGIGGASILASDTFSEGGPTKRPAVQVGDPFAEKVLIECCLELYRDKLVEGIQDLGAAGISCATSELASNGDGGMFIELDSVLLRDPSLTAEEILMSESQERMMAVVKPELLDQFLAVTAKWDVETSVLGEVTGTGRLVINWHGEEIANVDPRTVAIDGPVYERPVAYPSWIDALRADSASALALPVSGDALREQALALLGSANLADKSWITDQYDYFVGGNTALAFPDDAGMIRVDEESGLGFAIATDANGRYCQLDPKEGAKLALAEAYRNVAASGAVPAAVTDCLNFGSPENPEVMWQFSQAVEGLSDACLELGIPVTGGNVSFYNQTGDVPIFPTPVVGVLGVIDDVARRIPAGWQDEGENIYLLGITREELDGSAWAATVHGHLGGRPPAVDLAAERRLAETLHAASQQGLISSAHDLADGGLAQALTESVLRFGVGARVWLGDIAERDGVDAASALFSESTARAIVSVPREDDVKFRGLCDGRGVPALRIGVTDAGAGTEPVLEIQDLFAIEVAELRSVHRSTLAERFGPVVG.

His62 is a catalytic residue. ATP is bound by residues Tyr65 and Lys109. Glu111 serves as a coordination point for Mg(2+). Residues 112-115 (SHNH) and Arg134 contribute to the substrate site. The active-site Proton acceptor is the His113. Position 135 (Asp135) interacts with Mg(2+). Position 259 (Gln259) interacts with substrate. Asp287 contacts Mg(2+). 331–333 (ESQ) lines the substrate pocket. Residues Asp519 and Gly556 each coordinate ATP. Asn557 provides a ligand contact to Mg(2+). Ser559 contacts substrate.

This sequence belongs to the FGAMS family. Monomer. Part of the FGAM synthase complex composed of 1 PurL, 1 PurQ and 2 PurS subunits.

It localises to the cytoplasm. The catalysed reaction is N(2)-formyl-N(1)-(5-phospho-beta-D-ribosyl)glycinamide + L-glutamine + ATP + H2O = 2-formamido-N(1)-(5-O-phospho-beta-D-ribosyl)acetamidine + L-glutamate + ADP + phosphate + H(+). Its pathway is purine metabolism; IMP biosynthesis via de novo pathway; 5-amino-1-(5-phospho-D-ribosyl)imidazole from N(2)-formyl-N(1)-(5-phospho-D-ribosyl)glycinamide: step 1/2. Functionally, part of the phosphoribosylformylglycinamidine synthase complex involved in the purines biosynthetic pathway. Catalyzes the ATP-dependent conversion of formylglycinamide ribonucleotide (FGAR) and glutamine to yield formylglycinamidine ribonucleotide (FGAM) and glutamate. The FGAM synthase complex is composed of three subunits. PurQ produces an ammonia molecule by converting glutamine to glutamate. PurL transfers the ammonia molecule to FGAR to form FGAM in an ATP-dependent manner. PurS interacts with PurQ and PurL and is thought to assist in the transfer of the ammonia molecule from PurQ to PurL. This is Phosphoribosylformylglycinamidine synthase subunit PurL from Leifsonia xyli subsp. xyli (strain CTCB07).